The primary structure comprises 88 residues: MEWYMGKYIRPLSDAVFTIASDDLWIESLAIQQLHTTANLPNMQRVVGMPDLHPGRGYPIGAAFFSVGRFYPTRRRGNGAGNRNGPLL.

This is an uncharacterized protein from Escherichia coli O157:H7.